An 81-amino-acid chain; its full sequence is Cortexin-3 (81 aa).

The chain crosses the membrane as a helical span at residues 29–49 (MTFVFVILLFIFLGILIVRCF).

Belongs to the cortexin family.

The protein resides in the membrane. This is Cortexin-3 (CTXN3) from Homo sapiens (Human).